The following is a 122-amino-acid chain: Small ribosomal subunit protein uS13 (122 aa).

The segment at 95-122 (GLPVRGQRTHTNARTRKGPRRGTVGKKK) is disordered.

Belongs to the universal ribosomal protein uS13 family. As to quaternary structure, part of the 30S ribosomal subunit. Forms a loose heterodimer with protein S19. Forms two bridges to the 50S subunit in the 70S ribosome.

Functionally, located at the top of the head of the 30S subunit, it contacts several helices of the 16S rRNA. In the 70S ribosome it contacts the 23S rRNA (bridge B1a) and protein L5 of the 50S subunit (bridge B1b), connecting the 2 subunits; these bridges are implicated in subunit movement. Contacts the tRNAs in the A and P-sites. The polypeptide is Small ribosomal subunit protein uS13 (Nitratidesulfovibrio vulgaris (strain ATCC 29579 / DSM 644 / CCUG 34227 / NCIMB 8303 / VKM B-1760 / Hildenborough) (Desulfovibrio vulgaris)).